Consider the following 280-residue polypeptide: Putative pyruvate, phosphate dikinase regulatory protein (280 aa).

152–159 lines the ADP pocket; it reads GVSRTSKS.

Belongs to the pyruvate, phosphate/water dikinase regulatory protein family. PDRP subfamily.

It catalyses the reaction N(tele)-phospho-L-histidyl/L-threonyl-[pyruvate, phosphate dikinase] + ADP = N(tele)-phospho-L-histidyl/O-phospho-L-threonyl-[pyruvate, phosphate dikinase] + AMP + H(+). The catalysed reaction is N(tele)-phospho-L-histidyl/O-phospho-L-threonyl-[pyruvate, phosphate dikinase] + phosphate + H(+) = N(tele)-phospho-L-histidyl/L-threonyl-[pyruvate, phosphate dikinase] + diphosphate. Functionally, bifunctional serine/threonine kinase and phosphorylase involved in the regulation of the pyruvate, phosphate dikinase (PPDK) by catalyzing its phosphorylation/dephosphorylation. In Anaplasma phagocytophilum (strain HZ), this protein is Putative pyruvate, phosphate dikinase regulatory protein.